Reading from the N-terminus, the 872-residue chain is Alanine--tRNA ligase (872 aa).

Zn(2+) contacts are provided by His-567, His-571, Cys-669, and His-673.

This sequence belongs to the class-II aminoacyl-tRNA synthetase family. The cofactor is Zn(2+).

The protein resides in the cytoplasm. It carries out the reaction tRNA(Ala) + L-alanine + ATP = L-alanyl-tRNA(Ala) + AMP + diphosphate. Functionally, catalyzes the attachment of alanine to tRNA(Ala) in a two-step reaction: alanine is first activated by ATP to form Ala-AMP and then transferred to the acceptor end of tRNA(Ala). Also edits incorrectly charged Ser-tRNA(Ala) and Gly-tRNA(Ala) via its editing domain. This is Alanine--tRNA ligase from Streptococcus pneumoniae (strain Hungary19A-6).